Reading from the N-terminus, the 191-residue chain is Probable calcium-binding protein CML8 (191 aa).

The segment at 1–41 is disordered; it reads MASKYRGYYHDEASSAAGGGGGGGGGDGYRREKQVRKKRLT. Gly residues predominate over residues 17–27; the sequence is AGGGGGGGGGD. 4 EF-hand domains span residues 43–78, 79–114, 116–151, and 152–187; these read QKRK…LGFE, MTPE…KMGE, DARE…TGEP, and FTLD…IGFG. Residues aspartate 56, aspartate 58, serine 60, threonine 62, glutamate 67, aspartate 92, aspartate 94, serine 96, threonine 98, glutamate 103, aspartate 129, aspartate 131, asparagine 133, lysine 135, aspartate 140, aspartate 165, asparagine 167, aspartate 169, glutamate 171, and glutamate 176 each coordinate Ca(2+).

Potential calcium sensor. The chain is Probable calcium-binding protein CML8 (CML8) from Oryza sativa subsp. japonica (Rice).